The following is a 476-amino-acid chain: Flavin-dependent halogenase otaD (476 aa).

Residues Gly-14 and Gly-17 each contribute to the FAD site. Residues Ser-304 and Gly-305 each contribute to the chloride site. Val-306 is an FAD binding site.

It belongs to the flavin-dependent halogenase family.

The enzyme catalyses ochratoxin B + FADH2 + chloride + O2 = ochratoxin A + FAD + 2 H2O. Its pathway is mycotoxin biosynthesis. Flavin-dependent halogenase; part of the gene cluster that mediates the biosynthesis of ochratoxin A (OTA), a mycotoxin composed of a chlorinated type I polyketide dihydroisocoumarin moiety linked to L-phenylalanine, and demonstrated to have nephrotoxic, immunotoxic, genotoxic, neurotoxic, and teratogenic properties. OtaD chlorinates ochratoxin B (OTB) at the C-5 position to form OTA. The pathway begins with the highly reducing polyketide synthase otaA that catalyzes the formation of the isocoumarin group during the initial stages of biosynthesis, starting from one acetate and 4 malonate units, to originate the characteristic pentaketide skeleton 7-methylmellein (7-MM) of the OTA molecule. The newly identified cyclase otaY might be involved in the polyketide cyclization reaction during the initial steps of the OTA biosynthesis. 7-MM is then oxidized into 7-carboxymellein (also called ochratoxin beta) by the cytochrome P450 monooxygenase otaC. The NRPS encoded by the otaB gene is involved in the linking of phenylalanine to the dihydroisocoumarin ring. The reaction catalyzed by NRPS results in the production of ochratoxin B (OTB), which is the non-chlorinated analog of OTA and which subsequently serves as the substrate of the halogenase otaD for chlorination activity to form the final molecular structure of OTA, containing a chlorine atom in the C-5 position of the molecule. This is Flavin-dependent halogenase otaD from Aspergillus niger (strain ATCC MYA-4892 / CBS 513.88 / FGSC A1513).